Here is a 120-residue protein sequence, read N- to C-terminus: Flagellar protein FliT (120 aa).

Residues 1–50 form a required for homodimerization region; that stretch reads MERHQHLLSEYQQILTLSEQMLVLATEGNWDALVDLEMTYLKAVESTANI. Residues 60-98 are fliD binding; sequence LQDLLREKLRAILDNEIEIKRLLQLRLDRLSDLVGQSTK.

This sequence belongs to the FliT family. Homodimer. Interacts with FliD and FlhC.

The protein resides in the cytoplasm. The protein localises to the cytosol. Dual-function protein that regulates the transcription of class 2 flagellar operons and that also acts as an export chaperone for the filament-capping protein FliD. As a transcriptional regulator, acts as an anti-FlhDC factor; it directly binds FlhC, thus inhibiting the binding of the FlhC/FlhD complex to class 2 promoters, resulting in decreased expression of class 2 flagellar operons. As a chaperone, effects FliD transition to the membrane by preventing its premature polymerization, and by directing it to the export apparatus. The sequence is that of Flagellar protein FliT from Yersinia enterocolitica serotype O:8 / biotype 1B (strain NCTC 13174 / 8081).